The following is a 307-amino-acid chain: Glycerol-3-phosphate dehydrogenase [NAD(P)+] (307 aa).

The NADPH site is built by Trp-14, Arg-34, Arg-35, and Lys-82. Residues Lys-82 and Gly-110 each contribute to the sn-glycerol 3-phosphate site. Ser-114 lines the NADPH pocket. Sn-glycerol 3-phosphate is bound by residues Lys-165, Asp-218, Ser-228, Arg-229, and Asn-230. Lys-165 serves as the catalytic Proton acceptor. Arg-229 serves as a coordination point for NADPH. Glu-255 provides a ligand contact to NADPH.

Belongs to the NAD-dependent glycerol-3-phosphate dehydrogenase family.

The protein localises to the cytoplasm. The enzyme catalyses sn-glycerol 3-phosphate + NAD(+) = dihydroxyacetone phosphate + NADH + H(+). It catalyses the reaction sn-glycerol 3-phosphate + NADP(+) = dihydroxyacetone phosphate + NADPH + H(+). Its pathway is membrane lipid metabolism; glycerophospholipid metabolism. In terms of biological role, catalyzes the reduction of the glycolytic intermediate dihydroxyacetone phosphate (DHAP) to sn-glycerol 3-phosphate (G3P), the key precursor for phospholipid synthesis. This chain is Glycerol-3-phosphate dehydrogenase [NAD(P)+], found in Trichormus variabilis (strain ATCC 29413 / PCC 7937) (Anabaena variabilis).